A 630-amino-acid chain; its full sequence is Beta-phellandrene synthase, chloroplastic (630 aa).

Residues 1–48 constitute a chloroplast transit peptide; sequence MALVSSAPKSCLHKSLIRSTHHELKPLRRTIPTLGMCRRGKSFTPSVS. Residues D381, D385, and D533 each coordinate Mg(2+). The DDXXD motif motif lies at 381–385; that stretch reads DDIYD.

This sequence belongs to the terpene synthase family. Tpsd subfamily. The cofactor is Mg(2+). Mn(2+) is required as a cofactor. It depends on K(+) as a cofactor.

It is found in the plastid. The protein resides in the chloroplast. The enzyme catalyses (2E)-geranyl diphosphate = (-)-beta-phellandrene + diphosphate. Its pathway is terpene metabolism; oleoresin biosynthesis. Its function is as follows. Converts geranyl diphosphate to four products with (-)-(4S)-beta-phellandrene (52%) as the major olefin, and lesser amounts of (-)-(1S,5S)-beta-pinene (34%), (-)-1S,5S-alpha-pinene (8.5%), and (-)-(4S)-limonene (6%). Involved in defensive oleoresin formation in conifers in response to insect attack or other injury. Involved in monoterpene (C10) olefins biosynthesis. This chain is Beta-phellandrene synthase, chloroplastic (ag8), found in Abies grandis (Grand fir).